The chain runs to 264 residues: Hydroxyethylthiazole kinase (264 aa).

M52 is a binding site for substrate. The ATP site is built by R127 and T173. G200 serves as a coordination point for substrate.

Belongs to the Thz kinase family. Mg(2+) serves as cofactor.

The enzyme catalyses 5-(2-hydroxyethyl)-4-methylthiazole + ATP = 4-methyl-5-(2-phosphooxyethyl)-thiazole + ADP + H(+). Its pathway is cofactor biosynthesis; thiamine diphosphate biosynthesis; 4-methyl-5-(2-phosphoethyl)-thiazole from 5-(2-hydroxyethyl)-4-methylthiazole: step 1/1. Functionally, catalyzes the phosphorylation of the hydroxyl group of 4-methyl-5-beta-hydroxyethylthiazole (THZ). This chain is Hydroxyethylthiazole kinase, found in Pectobacterium carotovorum subsp. carotovorum (strain PC1).